We begin with the raw amino-acid sequence, 245 residues long: Ribosomal RNA small subunit methyltransferase G (245 aa).

Residues glycine 80, phenylalanine 85, 103–105 (DAT), 131–132 (AE), and arginine 150 each bind S-adenosyl-L-methionine.

The protein belongs to the methyltransferase superfamily. RNA methyltransferase RsmG family.

It localises to the cytoplasm. Functionally, specifically methylates the N7 position of a guanine in 16S rRNA. In Deinococcus geothermalis (strain DSM 11300 / CIP 105573 / AG-3a), this protein is Ribosomal RNA small subunit methyltransferase G.